The primary structure comprises 205 residues: Putative glutamine amidotransferase-like protein L716 (205 aa).

Positions 1-176 constitute a Glutamine amidotransferase type-1 domain; sequence MLLIIQNGYI…SNHIESYDYA (176 aa). Residues Cys-82, His-155, and Asp-157 each act as for GATase activity in the active site.

This chain is Putative glutamine amidotransferase-like protein L716, found in Acanthamoeba polyphaga mimivirus (APMV).